The primary structure comprises 487 residues: MAAALPRTLGELQLYRILQKANLLSYFDAFIQQGGDDVQQLCEAGEEEFLEIMALVGMASKPLHVRRLQKALRDWVTNPGLFNQPLTSLPVSSIPIYKLPEGSPTWLGISCSSYERSSNAREPHLKIPKCAATTCVQSLGQGKSDVVGSLALQSVGESRLWQGHHATESEHSLSPADLGSPASPKESSEALDAAAALSVAECVERMAPTLPKSDLNEVKELLKTNKKLAKMIGHIFEMNDDDPHKEEEIRKYSAIYGRFDSKRKDGKHLTLHELTVNEAAAQLCVKDNALLTRRDELFALARQISREVTYKYTYRTTKSKCGERDELSPKRIKVEDGFPDFQDSVQTLFQQARAKSEELAALSSQQPEKVMAKQMEFLCNQAGYERLQHAERRLSAGLYRQSSEEHSPNGLTSDNSDGQGERPLNLRMPNLQNRQPHHFVVDGELSRLYPSEAKSHSSESLGILKDYPHSAFTLEKKVIKTEPEDSR.

The segment at 4–82 (ALPRTLGELQ…RDWVTNPGLF (79 aa)) is NCD1. Residues K126, K129, and K143 each participate in a glycyl lysine isopeptide (Lys-Gly) (interchain with G-Cter in SUMO2) cross-link. A disordered region spans residues 162-188 (QGHHATESEHSLSPADLGSPASPKESS). Phosphoserine is present on residues S172 and S183. Residue K212 forms a Glycyl lysine isopeptide (Lys-Gly) (interchain with G-Cter in SUMO2) linkage. An NCD2 region spans residues 221 to 310 (LLKTNKKLAK…ARQISREVTY (90 aa)). Residues 307–338 (EVTYKYTYRTTKSKCGERDELSPKRIKVEDGF) form a necessary for nuclear localization region. S328 is modified (phosphoserine). K333 is covalently cross-linked (Glycyl lysine isopeptide (Lys-Gly) (interchain with G-Cter in SUMO1); alternate). A Glycyl lysine isopeptide (Lys-Gly) (interchain with G-Cter in SUMO2); alternate cross-link involves residue K333. Glycyl lysine isopeptide (Lys-Gly) (interchain with G-Cter in SUMO2) cross-links involve residues K355, K369, and K373. Residues 399–434 (YRQSSEEHSPNGLTSDNSDGQGERPLNLRMPNLQNR) form a disordered region. Position 407 is a phosphoserine (S407). Over residues 409–418 (NGLTSDNSDG) the composition is skewed to polar residues. Residues K454, K465, and K477 each participate in a glycyl lysine isopeptide (Lys-Gly) (interchain with G-Cter in SUMO2) cross-link. A Glycyl lysine isopeptide (Lys-Gly) (interchain with G-Cter in SUMO1); alternate cross-link involves residue K480. A Glycyl lysine isopeptide (Lys-Gly) (interchain with G-Cter in SUMO2); alternate cross-link involves residue K480.

Belongs to the NAB family. As to quaternary structure, homomultimers may associate with EGR1 bound to DNA. As to expression, isoform Short is found in myeloid leukemia cell line KG-1.

The protein localises to the nucleus. Acts as a transcriptional repressor for zinc finger transcription factors EGR1 and EGR2. This is NGFI-A-binding protein 1 (NAB1) from Homo sapiens (Human).